A 253-amino-acid chain; its full sequence is L-cysteine S-thiosulfotransferase subunit SoxA (253 aa).

The N-terminal stretch at 1–17 (MGKWVTIIFVLFLYAIA) is a signal peptide. The Cytochrome c domain occupies 44-129 (VYAEQGRDMF…SIATYVATLS (86 aa)). The heme c site is built by cysteine 64, cysteine 67, histidine 68, cysteine 102, cysteine 165, cysteine 168, and histidine 169. Substrate is bound at residue arginine 210. Cysteine 214 serves as a coordination point for heme c. The active-site Cysteine persulfide intermediate is cysteine 214.

It belongs to the SoxA family. As to quaternary structure, heterodimer of SoxA and SoxX. Requires heme c as cofactor. Post-translationally, cysteine persulfide at Cys-214.

Its subcellular location is the periplasm. It carries out the reaction L-cysteinyl-[SoxY protein] + thiosulfate + 2 Fe(III)-[cytochrome c] = S-sulfosulfanyl-L-cysteinyl-[SoxY protein] + 2 Fe(II)-[cytochrome c] + 2 H(+). The enzyme catalyses S-sulfanyl-L-cysteinyl-[SoxY protein] + thiosulfate + 2 Fe(III)-[cytochrome c] = S-(2-sulfodisulfanyl)-L-cysteinyl-[SoxY protein] + 2 Fe(II)-[cytochrome c] + 2 H(+). C-type diheme cytochrome, which is part of the SoxAX cytochrome complex involved in sulfur oxidation. The SoxAX complex catalyzes the formation of a heterodisulfide bond between the conserved cysteine residue on a sulfur carrier SoxYZ complex subunit SoxY and thiosulfate or other inorganic sulfur substrates. This leads to the liberation of two electrons, which may be transferred from the SoxAX complex to another cytochrome c that then channels them into the respiratory electron transport chain. Some electrons may be used for reductive CO(2) fixation. The chain is L-cysteine S-thiosulfotransferase subunit SoxA from Hydrogenobacter thermophilus (strain DSM 6534 / IAM 12695 / TK-6).